The sequence spans 221 residues: MIIKVCGMREPQNIREVAALAINWIGFIFYERSKRFVERCPTEQQATDSEQLSPKKVGVFVNATIESMMEKASTYKLDYLQLHGNESPEDCHTLQKRGYSLIKAFPIATKEDFEKTREYEGRVDYFLFDTRCEGYGGSGKRFDWSILTGYKGETPFLLSGGIRPENAEAIRNFRHPRFAGIDLNSGFEIEPGLKDIDKLKNFIQQILHPAVETGRAPSPTV.

The protein belongs to the TrpF family.

It carries out the reaction N-(5-phospho-beta-D-ribosyl)anthranilate = 1-(2-carboxyphenylamino)-1-deoxy-D-ribulose 5-phosphate. It participates in amino-acid biosynthesis; L-tryptophan biosynthesis; L-tryptophan from chorismate: step 3/5. This Parabacteroides distasonis (strain ATCC 8503 / DSM 20701 / CIP 104284 / JCM 5825 / NCTC 11152) protein is N-(5'-phosphoribosyl)anthranilate isomerase.